The primary structure comprises 317 residues: MKQFVRPEFILLKEGQDKNYGKFSVSPLERGFGITLGNAIRRTLLAATPGASVYAIKIAGATHEFTSIPGIIENVTKIILNIKQLVLRIDTSIYSDDEVVQLKIRSDIQGPVYAGDLELPAGVEVLNQDLLIATISEGGILDLVLYAKNSRGYKTFKDNKNEKNIEPGMITIDSNYSPIIKVAYSVDSAKIGRAIDLEKLELEVTTDGSITAIDAISIASKILVAHLEFFIDLNREISVLEVIGVNQTDDKELDRTVEELDFTQRSLNCLKRAGINTLRELVTKNEDEIGSIRNLGRKSLKEIKDKVASLGLAFRQS.

An alpha N-terminal domain (alpha-NTD) region spans residues 1 to 234 (MKQFVRPEFI…AHLEFFIDLN (234 aa)). The segment at 249–317 (DDKELDRTVE…ASLGLAFRQS (69 aa)) is alpha C-terminal domain (alpha-CTD).

This sequence belongs to the RNA polymerase alpha chain family. Homodimer. The RNAP catalytic core consists of 2 alpha, 1 beta, 1 beta' and 1 omega subunit. When a sigma factor is associated with the core the holoenzyme is formed, which can initiate transcription.

The catalysed reaction is RNA(n) + a ribonucleoside 5'-triphosphate = RNA(n+1) + diphosphate. Functionally, DNA-dependent RNA polymerase catalyzes the transcription of DNA into RNA using the four ribonucleoside triphosphates as substrates. This is DNA-directed RNA polymerase subunit alpha from Mycoplasma capricolum subsp. capricolum (strain California kid / ATCC 27343 / NCTC 10154).